Here is a 151-residue protein sequence, read N- to C-terminus: Large ribosomal subunit protein uL15 (151 aa).

Positions 1–62 are disordered; that stretch reads MVKLNELFPK…GGQMPLYRRV (62 aa). Basic residues predominate over residues 11–20; the sequence is HGSRKAKRRI.

The protein belongs to the universal ribosomal protein uL15 family. In terms of assembly, part of the 50S ribosomal subunit.

Functionally, binds to the 23S rRNA. This chain is Large ribosomal subunit protein uL15, found in Elusimicrobium minutum (strain Pei191).